The following is a 451-amino-acid chain: MTSISKRKNQQEHIPAEDLETPKLPKREKIEGTKESNKVRIIILLGYSGYGYHGIQINNPLKTIEGDVVAVLKKLGYLKTNNIDAEHLCIARAARTDKGVHTLRNLISLNLFVDKPLDISLLKTELNEALCSQIRVWSVFPAPKYFNPRISCESRTYEYLIPSFALLPPKPSCPLFKKMQKNLSRKLDNELERNLVYSMNDLISFWNTVKLKQKEIQEMFDTNKDAFTNPFKGMFYEKPIPAGIVIPPQAKLKKALKQAEYYCYMNYRIKEDRLKVLQQLLKKYEGRHNFHNFTVTDDSTSPSNYRFIESVTCGTPFVYENWEWIPVTIKGNSFMLNQIRKMMAHVLMIIRSCAPTGLIDKAFDPNITMNISKSPGHVLLLKDIKFSSYNDSVTDGLEKIQFDCFEEDILSLKIKTIYPDIIKLEQKEKLFFSFLSYIDQHTGHQFDYLFG.

Positions 1 to 30 (MTSISKRKNQQEHIPAEDLETPKLPKREKI) are disordered. Over residues 9–30 (NQQEHIPAEDLETPKLPKREKI) the composition is skewed to basic and acidic residues. The active-site Nucleophile is D97. Residue Y157 coordinates substrate.

Belongs to the tRNA pseudouridine synthase TruA family. Requires Zn(2+) as cofactor.

The protein localises to the nucleus. It carries out the reaction a uridine in tRNA = a pseudouridine in tRNA. In terms of biological role, formation of pseudouridine at positions 27 and 28 in the anticodon stem and loop of transfer RNAs; at positions 34 and 36 of intron-containing precursor tRNA(Ile) and at position 35 in the intron-containing tRNA(Tyr). This is tRNA pseudouridine synthase 2 (pus2) from Schizosaccharomyces pombe (strain 972 / ATCC 24843) (Fission yeast).